We begin with the raw amino-acid sequence, 629 residues long: tRNA uridine 5-carboxymethylaminomethyl modification enzyme MnmG (629 aa).

13–18 (GGGHAG) lines the FAD pocket. 273–287 (GPRYCPSIEDKINRF) serves as a coordination point for NAD(+).

Belongs to the MnmG family. In terms of assembly, homodimer. Heterotetramer of two MnmE and two MnmG subunits. The cofactor is FAD.

Its subcellular location is the cytoplasm. Functionally, NAD-binding protein involved in the addition of a carboxymethylaminomethyl (cmnm) group at the wobble position (U34) of certain tRNAs, forming tRNA-cmnm(5)s(2)U34. This chain is tRNA uridine 5-carboxymethylaminomethyl modification enzyme MnmG, found in Shewanella piezotolerans (strain WP3 / JCM 13877).